Consider the following 405-residue polypeptide: Argininosuccinate synthase (405 aa).

ATP is bound by residues 10 to 18 (AYSGGLDTS) and Ala-37. Residues Tyr-88 and Ser-93 each coordinate L-citrulline. Gly-118 lines the ATP pocket. Residues Thr-120, Asn-124, and Asp-125 each contribute to the L-aspartate site. Asn-124 lines the L-citrulline pocket. L-citrulline-binding residues include Arg-128, Ser-179, Ser-188, Glu-264, and Tyr-276.

This sequence belongs to the argininosuccinate synthase family. Type 1 subfamily. Homotetramer.

It is found in the cytoplasm. The enzyme catalyses L-citrulline + L-aspartate + ATP = 2-(N(omega)-L-arginino)succinate + AMP + diphosphate + H(+). It functions in the pathway amino-acid biosynthesis; L-arginine biosynthesis; L-arginine from L-ornithine and carbamoyl phosphate: step 2/3. In Ectopseudomonas mendocina (strain ymp) (Pseudomonas mendocina), this protein is Argininosuccinate synthase.